The chain runs to 178 residues: MQKSISFFVIFSILWGSLFLFSIIGSLGTTPIPLTKDSKFLMSSILPQGWGFFSKNPRDTAIGLYEAENASAKVRWPNMRADNLFGLYRYGRSQGVEMGVIYSQVGKEQWTACKEKDLGACKSKAKTVQLKTPAPRPLLCGSYYLTKEDIVPWSYSKYTPSSYQVKSIVKVVISCSKT.

Residues 7–29 (FFVIFSILWGSLFLFSIIGSLGT) form a helical membrane-spanning segment.

The protein resides in the membrane. This is an uncharacterized protein from Bacillus subtilis (strain 168).